A 209-amino-acid chain; its full sequence is Ribosomal RNA large subunit methyltransferase E (209 aa).

The S-adenosyl-L-methionine site is built by G63, W65, D83, D99, and D124. K164 functions as the Proton acceptor in the catalytic mechanism.

Belongs to the class I-like SAM-binding methyltransferase superfamily. RNA methyltransferase RlmE family.

Its subcellular location is the cytoplasm. It catalyses the reaction uridine(2552) in 23S rRNA + S-adenosyl-L-methionine = 2'-O-methyluridine(2552) in 23S rRNA + S-adenosyl-L-homocysteine + H(+). Specifically methylates the uridine in position 2552 of 23S rRNA at the 2'-O position of the ribose in the fully assembled 50S ribosomal subunit. The chain is Ribosomal RNA large subunit methyltransferase E from Photorhabdus laumondii subsp. laumondii (strain DSM 15139 / CIP 105565 / TT01) (Photorhabdus luminescens subsp. laumondii).